The sequence spans 746 residues: Protein C-mannosyl-transferase DPY19L1 (746 aa).

The interval 1-68 is disordered; sequence MVLQARSKHR…RAGTAAPAPD (68 aa). Residues Ser-28 and Ser-31 each carry the phosphoserine modification. A compositionally biased stretch (low complexity) spans 59-68; it reads RAGTAAPAPD. 11 consecutive transmembrane segments (helical) span residues 137 to 159, 227 to 247, 257 to 279, 307 to 325, 331 to 350, 357 to 374, 380 to 396, 405 to 425, 481 to 501, 520 to 540, and 562 to 582; these read LYYS…WMIM, ACFY…LFFI, LGGV…VMWT, LCRG…FMLP, FVLL…GYID, IIYM…LMFG, TSYY…MLAM, VSEL…TVIL, LLLP…FNDM, GELV…VLIM, and LFGW…ILAA.

This sequence belongs to the dpy-19 family.

Its subcellular location is the endoplasmic reticulum membrane. The catalysed reaction is L-tryptophyl-[protein] + a di-trans,poly-cis-dolichyl beta-D-mannosyl phosphate = C-alpha-D-mannosyl-L-tryptophyl-[protein] + a di-trans,poly-cis-dolichyl phosphate + H(+). It participates in protein modification; protein glycosylation. Functionally, C-mannosyltransferase that mediates the C-mannosylation tryptophan residues on target proteins. The reaction occurs on the luminal side of the endoplasmic reticulum and involves the transfer of a mannose unit from a dolichylphosphate mannose (Dol-P-Man) donor to an acceptor protein containing a WxxW consensus sequence. C-mannosylates the first two tryptophans in the WxxWxxWxxC sequence motif in thrombospondin (TSP) type-1 repeats of UNC5A. Regulates neurite extension during development. This Mus musculus (Mouse) protein is Protein C-mannosyl-transferase DPY19L1 (Dpy19l1).